The chain runs to 405 residues: Phosphoglycerate kinase (405 aa).

Residues 24 to 26 (DFN), Arg40, 63 to 66 (HLGR), Arg122, and Arg162 contribute to the substrate site. ATP-binding positions include Lys213, Glu332, and 361-364 (GGDS).

Belongs to the phosphoglycerate kinase family. Monomer.

The protein resides in the cytoplasm. The catalysed reaction is (2R)-3-phosphoglycerate + ATP = (2R)-3-phospho-glyceroyl phosphate + ADP. Its pathway is carbohydrate degradation; glycolysis; pyruvate from D-glyceraldehyde 3-phosphate: step 2/5. In Corynebacterium diphtheriae (strain ATCC 700971 / NCTC 13129 / Biotype gravis), this protein is Phosphoglycerate kinase.